The chain runs to 368 residues: Homoserine dehydrogenase (368 aa).

NAD(+) contacts are provided by valine 12, glycine 14, and valine 15. Valine 15 provides a ligand contact to NADP(+). Residues valine 15, lysine 59, threonine 95, serine 96, and lysine 119 each contribute to the NADPH site. Residue threonine 95 coordinates NAD(+). An NADP(+)-binding site is contributed by threonine 95. Lysine 119 contributes to the NADP(+) binding site. Residues glutamate 146, valine 149, alanine 151, and leucine 153 each coordinate Na(+). NADP(+)-binding residues include glycine 209 and glutamate 212. Residues glutamate 212 and aspartate 223 each coordinate L-homoserine. The active-site Proton donor is the lysine 227. Glycine 349 is a binding site for NAD(+). Glycine 349 is an NADP(+) binding site. Residue glycine 349 participates in NADPH binding.

The protein belongs to the homoserine dehydrogenase family. The cofactor is a metal cation.

The catalysed reaction is L-homoserine + NADP(+) = L-aspartate 4-semialdehyde + NADPH + H(+). It catalyses the reaction L-homoserine + NAD(+) = L-aspartate 4-semialdehyde + NADH + H(+). It participates in amino-acid biosynthesis; L-methionine biosynthesis via de novo pathway; L-homoserine from L-aspartate: step 3/3. Its pathway is amino-acid biosynthesis; L-threonine biosynthesis; L-threonine from L-aspartate: step 3/5. Its function is as follows. Catalyzes the conversion of L-aspartate-beta-semialdehyde (L-Asa) to L-homoserine (L-Hse), the third step in the biosynthesis of amino acids that derive from aspartate (the aspartate family of amino acids), including methioinine and threonine, the latter of which is a precursor to isoleucine; production of homoserine leads to a branch-point in the pathway as it can either be O-phosphorylated for processing to threonine, or O-acylated for processing to methionine. The sequence is that of Homoserine dehydrogenase from Emericella nidulans (strain FGSC A4 / ATCC 38163 / CBS 112.46 / NRRL 194 / M139) (Aspergillus nidulans).